A 460-amino-acid chain; its full sequence is Chromosomal replication initiator protein DnaA (460 aa).

The segment at 1–84 (MAVSLWQQCI…RFDIGSRPSA (84 aa)) is domain I, interacts with DnaA modulators. Residues 84–123 (AKKPEPAPVAAVRVPNPQTKASVGTSFNTTEPVVNANHRS) are domain II. The domain III, AAA+ region stretch occupies residues 124 to 340 (NINPTYQFDN…GALNRVIANA (217 aa)). Residues Gly168, Gly170, Lys171, and Thr172 each coordinate ATP. Residues 341–460 (NFTGRPITID…YANLIRTLSS (120 aa)) are domain IV, binds dsDNA.

This sequence belongs to the DnaA family. Oligomerizes as a right-handed, spiral filament on DNA at oriC.

Its subcellular location is the cytoplasm. Functionally, plays an essential role in the initiation and regulation of chromosomal replication. ATP-DnaA binds to the origin of replication (oriC) to initiate formation of the DNA replication initiation complex once per cell cycle. Binds the DnaA box (a 9 base pair repeat at the origin) and separates the double-stranded (ds)DNA. Forms a right-handed helical filament on oriC DNA; dsDNA binds to the exterior of the filament while single-stranded (ss)DNA is stabiized in the filament's interior. The ATP-DnaA-oriC complex binds and stabilizes one strand of the AT-rich DNA unwinding element (DUE), permitting loading of DNA polymerase. After initiation quickly degrades to an ADP-DnaA complex that is not apt for DNA replication. Binds acidic phospholipids. This Shewanella sp. (strain MR-7) protein is Chromosomal replication initiator protein DnaA.